A 252-amino-acid polypeptide reads, in one-letter code: N-acetylglucosaminyl-phosphatidylinositol de-N-acetylase (252 aa).

Residues 2-22 (ELVGFLCVAVAVLTWGFLRVW) form a helical membrane-spanning segment. Residues 23-252 (NSAERMRSPE…YMRINSLRFL (230 aa)) are Cytoplasmic-facing.

The protein belongs to the PIGL family.

It localises to the endoplasmic reticulum membrane. The catalysed reaction is a 6-(N-acetyl-alpha-D-glucosaminyl)-1-(1,2-diacyl-sn-glycero-3-phospho)-1D-myo-inositol + H2O = a 6-(alpha-D-glucosaminyl)-1-(1,2-diacyl-sn-glycero-3-phospho)-1D-myo-inositol + acetate. The protein operates within glycolipid biosynthesis; glycosylphosphatidylinositol-anchor biosynthesis. In terms of biological role, catalyzes the second step of glycosylphosphatidylinositol (GPI) biosynthesis, which is the de-N-acetylation of N-acetylglucosaminyl-phosphatidylinositol. The polypeptide is N-acetylglucosaminyl-phosphatidylinositol de-N-acetylase (Pigl) (Mus musculus (Mouse)).